We begin with the raw amino-acid sequence, 67 residues long: Small ribosomal subunit protein bS21 (67 aa).

It belongs to the bacterial ribosomal protein bS21 family.

The polypeptide is Small ribosomal subunit protein bS21 (Paramagnetospirillum magneticum (strain ATCC 700264 / AMB-1) (Magnetospirillum magneticum)).